A 556-amino-acid polypeptide reads, in one-letter code: Formate--tetrahydrofolate ligase (556 aa).

65–72 is a binding site for ATP; it reads TPAGEGKS.

It belongs to the formate--tetrahydrofolate ligase family.

It carries out the reaction (6S)-5,6,7,8-tetrahydrofolate + formate + ATP = (6R)-10-formyltetrahydrofolate + ADP + phosphate. The protein operates within one-carbon metabolism; tetrahydrofolate interconversion. The polypeptide is Formate--tetrahydrofolate ligase (Streptococcus pneumoniae (strain Taiwan19F-14)).